Reading from the N-terminus, the 882-residue chain is Valine--tRNA ligase (882 aa).

Residues 45–55 (PNVTGKLHLGH) carry the 'HIGH' region motif. The 'KMSKS' region signature appears at 519–523 (KMSKS). K522 contacts ATP. Positions 808–877 (LADLLNVEEE…DATQERIVEM (70 aa)) form a coiled coil.

It belongs to the class-I aminoacyl-tRNA synthetase family. ValS type 1 subfamily. In terms of assembly, monomer.

It is found in the cytoplasm. It catalyses the reaction tRNA(Val) + L-valine + ATP = L-valyl-tRNA(Val) + AMP + diphosphate. Its function is as follows. Catalyzes the attachment of valine to tRNA(Val). As ValRS can inadvertently accommodate and process structurally similar amino acids such as threonine, to avoid such errors, it has a 'posttransfer' editing activity that hydrolyzes mischarged Thr-tRNA(Val) in a tRNA-dependent manner. This chain is Valine--tRNA ligase, found in Streptococcus pyogenes serotype M6 (strain ATCC BAA-946 / MGAS10394).